The sequence spans 128 residues: Large ribosomal subunit protein bL12 (128 aa).

The protein belongs to the bacterial ribosomal protein bL12 family. As to quaternary structure, homodimer. Part of the ribosomal stalk of the 50S ribosomal subunit. Forms a multimeric L10(L12)X complex, where L10 forms an elongated spine to which 2 to 4 L12 dimers bind in a sequential fashion. Binds GTP-bound translation factors.

In terms of biological role, forms part of the ribosomal stalk which helps the ribosome interact with GTP-bound translation factors. Is thus essential for accurate translation. This chain is Large ribosomal subunit protein bL12, found in Rubrobacter xylanophilus (strain DSM 9941 / JCM 11954 / NBRC 16129 / PRD-1).